Here is a 334-residue protein sequence, read N- to C-terminus: L-lactate dehydrogenase B chain (334 aa).

Residues 30–58 (GQVGMACAVSILLRELTDEIALVDVLEDK) and Arg-100 each bind NAD(+). Residues Arg-107, Asn-139, and Arg-170 each contribute to the substrate site. NAD(+) is bound at residue Asn-139. His-194 acts as the Proton acceptor in catalysis. Thr-249 lines the substrate pocket.

It belongs to the LDH/MDH superfamily. LDH family. Homotetramer.

It localises to the cytoplasm. The enzyme catalyses (S)-lactate + NAD(+) = pyruvate + NADH + H(+). Its pathway is fermentation; pyruvate fermentation to lactate; (S)-lactate from pyruvate: step 1/1. Its function is as follows. Interconverts simultaneously and stereospecifically pyruvate and lactate with concomitant interconversion of NADH and NAD(+). The polypeptide is L-lactate dehydrogenase B chain (ldhb) (Squalus acanthias (Spiny dogfish)).